Reading from the N-terminus, the 112-residue chain is Large ribosomal subunit protein eL34A (112 aa).

It belongs to the eukaryotic ribosomal protein eL34 family. As to quaternary structure, component of the large ribosomal subunit (LSU). Mature yeast ribosomes consist of a small (40S) and a large (60S) subunit. The 40S small subunit contains 1 molecule of ribosomal RNA (18S rRNA) and at least 33 different proteins. The large 60S subunit contains 3 rRNA molecules (25S, 5.8S and 5S rRNA) and at least 46 different proteins.

The protein resides in the cytoplasm. Component of the ribosome, a large ribonucleoprotein complex responsible for the synthesis of proteins in the cell. The small ribosomal subunit (SSU) binds messenger RNAs (mRNAs) and translates the encoded message by selecting cognate aminoacyl-transfer RNA (tRNA) molecules. The large subunit (LSU) contains the ribosomal catalytic site termed the peptidyl transferase center (PTC), which catalyzes the formation of peptide bonds, thereby polymerizing the amino acids delivered by tRNAs into a polypeptide chain. The nascent polypeptides leave the ribosome through a tunnel in the LSU and interact with protein factors that function in enzymatic processing, targeting, and the membrane insertion of nascent chains at the exit of the ribosomal tunnel. The protein is Large ribosomal subunit protein eL34A (rpl3401) of Schizosaccharomyces pombe (strain 972 / ATCC 24843) (Fission yeast).